The chain runs to 515 residues: uncharacterized protein (515 aa).

The protein belongs to the AllF family.

This is an uncharacterized protein from Escherichia coli (strain K12).